The following is a 450-amino-acid chain: FERM domain-containing protein 8 (450 aa).

Residues 28–373 (MDVIVYLIND…YCIELSQTTE (346 aa)) form the FERM domain.

It is found in the cytoplasm. Its subcellular location is the cytosol. The protein localises to the cell membrane. Promotes the cell surface stability of RHBDF1 and RHBDF2 and prevents their degradation via the endolysosomal pathway. By acting on RHBDF proteins, involved in ADAM17-mediated ligand shedding. May negatively regulate Wnt signaling. The protein is FERM domain-containing protein 8 (frmd8) of Xenopus tropicalis (Western clawed frog).